Consider the following 496-residue polypeptide: Signal recognition particle subunit SRP54 1 (496 aa).

The interval 1–296 (MVLAQLGGSI…DVKPFVSRLL (296 aa)) is G-domain. Residues 108-115 (GLQGSGKT), 191-195 (DTSGR), and 249-252 (TKMD) each bind GTP. Residues 297-496 (GMGDLSGLVN…MGMFGGGGGE (200 aa)) are M-domain.

It belongs to the GTP-binding SRP family. SRP54 subfamily. As to quaternary structure, component of a signal recognition particle (SRP) complex that consists of a 7SL RNA molecule of 300 nucleotides and six protein subunits: SRP72, SRP68, SRP54, SRP19, SRP14 and SRP9.

Its subcellular location is the cytoplasm. The protein localises to the endoplasmic reticulum. It carries out the reaction GTP + H2O = GDP + phosphate + H(+). Functionally, component of the signal recognition particle (SRP) complex, a ribonucleoprotein complex that mediates the cotranslational targeting of secretory and membrane proteins to the endoplasmic reticulum (ER). As part of the SRP complex, associates with the SRP receptor (SR) component SRPRA to target secretory proteins to the endoplasmic reticulum membrane. Binds to the signal sequence of presecretory proteins when they emerge from the ribosomes. Displays basal GTPase activity, and stimulates reciprocal GTPase activation of the SR subunit SRPRA. Forms a guanosine 5'-triphosphate (GTP)-dependent complex with the SR subunit SRPRA. SR compaction and GTPase mediated rearrangement of SR drive SRP-mediated cotranslational protein translocation into the ER. Requires the presence of SRP9/SRP14 and/or SRP19 to stably interact with RNA. This is Signal recognition particle subunit SRP54 1 from Solanum lycopersicum (Tomato).